The primary structure comprises 342 residues: MPKEQNLDIERKQEHIEINLKQNVNSTLKSGLESIKFIHNALPEINYDSIDTTTTFLGKDMKAPILISSMTGGTARARDINYRLAQAAQKSGIAMGLGSMRILLTKPDTIKTFTVRHVAPDIPLLANIGAVQLNYGVTPKECQYLIDTIKADALILHLNVLHELTQPEGNKNWENLLPKIKEVINYLSVPVIVKEVGYGLSKQVAKKLIKAGVKVLDIAGSGGTSWSQVEAYRAKNSMQNRIASSFINWGITTLDSLKMLQEISKDITIIASGGLQSGIDGAKAIRMGANIFGLAGKLLKAADIAESLVLEEIQVIIEQLKITMLCTGSCTLKDLAKAEIMW.

Residue 11–12 (RK) coordinates substrate. FMN contacts are provided by residues Ser68, 69-71 (SMT), Ser99, and Asn127. 99 to 101 (SMR) is a binding site for substrate. Glu163 is a binding site for Mg(2+). Residues Lys194, Thr224, and 295 to 296 (AG) each bind FMN.

It belongs to the IPP isomerase type 2 family. In terms of assembly, homooctamer. Dimer of tetramers. Requires FMN as cofactor. It depends on NADPH as a cofactor. The cofactor is Mg(2+).

The protein localises to the cytoplasm. It catalyses the reaction isopentenyl diphosphate = dimethylallyl diphosphate. Functionally, involved in the biosynthesis of isoprenoids. Catalyzes the 1,3-allylic rearrangement of the homoallylic substrate isopentenyl (IPP) to its allylic isomer, dimethylallyl diphosphate (DMAPP). In Rickettsia prowazekii (strain Madrid E), this protein is Isopentenyl-diphosphate delta-isomerase.